Here is a 175-residue protein sequence, read N- to C-terminus: Adenine phosphoribosyltransferase (175 aa).

It belongs to the purine/pyrimidine phosphoribosyltransferase family. Homodimer.

Its subcellular location is the cytoplasm. The catalysed reaction is AMP + diphosphate = 5-phospho-alpha-D-ribose 1-diphosphate + adenine. The protein operates within purine metabolism; AMP biosynthesis via salvage pathway; AMP from adenine: step 1/1. Catalyzes a salvage reaction resulting in the formation of AMP, that is energically less costly than de novo synthesis. The polypeptide is Adenine phosphoribosyltransferase (Synechococcus sp. (strain CC9902)).